We begin with the raw amino-acid sequence, 239 residues long: ATP-dependent dethiobiotin synthetase BioD (239 aa).

15 to 20 (EIGKTF) serves as a coordination point for ATP. Thr19 lines the Mg(2+) pocket. Lys40 is an active-site residue. ATP is bound by residues Asp57, 118–121 (EGVG), and 178–179 (NH). Mg(2+)-binding residues include Asp57 and Glu118.

This sequence belongs to the dethiobiotin synthetase family. As to quaternary structure, homodimer. The cofactor is Mg(2+).

The protein localises to the cytoplasm. The enzyme catalyses (7R,8S)-7,8-diammoniononanoate + CO2 + ATP = (4R,5S)-dethiobiotin + ADP + phosphate + 3 H(+). It participates in cofactor biosynthesis; biotin biosynthesis; biotin from 7,8-diaminononanoate: step 1/2. Catalyzes a mechanistically unusual reaction, the ATP-dependent insertion of CO2 between the N7 and N8 nitrogen atoms of 7,8-diaminopelargonic acid (DAPA, also called 7,8-diammoniononanoate) to form a ureido ring. This Burkholderia ambifaria (strain ATCC BAA-244 / DSM 16087 / CCUG 44356 / LMG 19182 / AMMD) (Burkholderia cepacia (strain AMMD)) protein is ATP-dependent dethiobiotin synthetase BioD.